A 142-amino-acid polypeptide reads, in one-letter code: Hemoglobin subunit alpha-A (142 aa).

A Globin domain is found at 2–142 (VLSAADKNNV…VGTVLTAKYR (141 aa)). His-59 lines the O2 pocket. Residue His-88 coordinates heme b.

Belongs to the globin family. In terms of assembly, heterotetramer of two alpha chains and two beta chains. Red blood cells.

In terms of biological role, involved in oxygen transport from the lung to the various peripheral tissues. The protein is Hemoglobin subunit alpha-A (HBAA) of Gallus gallus (Chicken).